The following is a 194-amino-acid chain: Peptidyl-tRNA hydrolase (194 aa).

Tyr16 serves as a coordination point for tRNA. Residue His21 is the Proton acceptor of the active site. Residues Phe67, Asn69, and Asn115 each contribute to the tRNA site.

Belongs to the PTH family. In terms of assembly, monomer.

The protein localises to the cytoplasm. It catalyses the reaction an N-acyl-L-alpha-aminoacyl-tRNA + H2O = an N-acyl-L-amino acid + a tRNA + H(+). Functionally, hydrolyzes ribosome-free peptidyl-tRNAs (with 1 or more amino acids incorporated), which drop off the ribosome during protein synthesis, or as a result of ribosome stalling. Its function is as follows. Catalyzes the release of premature peptidyl moieties from peptidyl-tRNA molecules trapped in stalled 50S ribosomal subunits, and thus maintains levels of free tRNAs and 50S ribosomes. This Colwellia psychrerythraea (strain 34H / ATCC BAA-681) (Vibrio psychroerythus) protein is Peptidyl-tRNA hydrolase.